We begin with the raw amino-acid sequence, 198 residues long: Probable molybdenum cofactor guanylyltransferase (198 aa).

GTP is bound by residues 9–11 (LAG), lysine 22, aspartate 66, and aspartate 95. Aspartate 95 is a binding site for Mg(2+).

This sequence belongs to the MobA family. It depends on Mg(2+) as a cofactor.

The protein resides in the cytoplasm. It carries out the reaction Mo-molybdopterin + GTP + H(+) = Mo-molybdopterin guanine dinucleotide + diphosphate. In terms of biological role, transfers a GMP moiety from GTP to Mo-molybdopterin (Mo-MPT) cofactor (Moco or molybdenum cofactor) to form Mo-molybdopterin guanine dinucleotide (Mo-MGD) cofactor. This Clostridium perfringens (strain 13 / Type A) protein is Probable molybdenum cofactor guanylyltransferase.